Consider the following 221-residue polypeptide: uncharacterized protein (221 aa).

An N-terminal signal peptide occupies residues 1-30; sequence MAKFNNNILLIILIIVILFIIFYFLNKNNQ.

It localises to the virion. This is an uncharacterized protein from Acanthamoeba polyphaga mimivirus (APMV).